The chain runs to 1181 residues: Putative type II restriction enzyme and methyltransferase RM.MjaORFECS2P (1181 aa).

In the C-terminal section; belongs to the N(4)/N(6)-methyltransferase family.

It catalyses the reaction Endonucleolytic cleavage of DNA to give specific double-stranded fragments with terminal 5'-phosphates.. It carries out the reaction a 2'-deoxyadenosine in DNA + S-adenosyl-L-methionine = an N(6)-methyl-2'-deoxyadenosine in DNA + S-adenosyl-L-homocysteine + H(+). Its function is as follows. Probably a G subtype restriction enzyme that recognizes an undetermined sequence and cleaves at an undetermined site. Probably also acts as an alpha subtype methylase, presumably on the same sequence. The polypeptide is Putative type II restriction enzyme and methyltransferase RM.MjaORFECS2P (Methanocaldococcus jannaschii (strain ATCC 43067 / DSM 2661 / JAL-1 / JCM 10045 / NBRC 100440) (Methanococcus jannaschii)).